We begin with the raw amino-acid sequence, 765 residues long: Nucleolar transcription factor 1 (765 aa).

Methionine 1 carries the N-acetylmethionine modification. The disordered stretch occupies residues 1-21; that stretch reads MNGEADCPTDLEMAAPKGQDR. 2 consecutive DNA-binding regions (HMG box) follow at residues 112–180 and 196–264; these read PKKP…ARFR and PEKP…RDYI. The residue at position 201 (threonine 201) is a Phosphothreonine. A phosphoserine mark is found at serine 273, serine 336, and serine 364. A DNA-binding region (HMG box 3) is located at residues 298–362; sequence TKPPPNSYSL…DYEVELLRFL (65 aa). The segment covering 370-379 has biased composition (basic and acidic residues); that stretch reads QQRVLGEEKM. Positions 370–411 are disordered; sequence QQRVLGEEKMLNINKKQTTSPASKKPSQEGGKGGSEKPKRPV. Phosphoserine is present on residues serine 389, serine 412, serine 433, serine 435, serine 484, serine 495, serine 546, serine 584, and serine 638. DNA-binding regions (HMG box) lie at residues 407 to 475, 482 to 549, and 568 to 634; these read PKRP…GGER, PESP…SEMR, and KKPP…DLWV. The disordered stretch occupies residues 456-487; sequence YKAREAALKAQSERKPGGEREDRGKLPESPKR. Residues 457 to 487 are compositionally biased toward basic and acidic residues; that stretch reads KAREAALKAQSERKPGGEREDRGKLPESPKR. The interval 546–576 is disordered; that stretch reads SEMRAPPAATNSSKKMKFQGEPKKPPMNGYQ. The segment at 649–765 is disordered; that stretch reads ISNKRKNMTK…SGDSSDSGSN (117 aa). The segment covering 664 to 674 has biased composition (polar residues); the sequence is PKSSRTTLQSK. Positions 677 to 746 are enriched in acidic residues; the sequence is SEEDDDEEEE…DDDEDEDNES (70 aa). Over residues 747-765 the composition is skewed to low complexity; that stretch reads EGSSSSSSSSGDSSDSGSN.

Homodimer. Part of Pol I pre-initiation complex (PIC), in which Pol I core assembles with RRN3 and promoter-bound UTBF and SL1/TIF-IB complex. Interacts with TOP2A in the context of Pol I complex. Interacts with TBP. Interacts with TAF1A. Interacts with RASL11A. Binds to IRS1 and PIK3CA. Interacts with DHX33. Interacts with PHF6. Interacts with CEBPA (isoform 1 and isoform 4). Interacts with DDX11. Interacts with NOP53. Interacts with ALKBH2. Phosphorylated and activated by PIK3CA.

The protein localises to the nucleus. It localises to the nucleolus. In terms of biological role, recognizes the ribosomal RNA gene promoter and activates transcription mediated by RNA polymerase I through cooperative interactions with the transcription factor SL1/TIF-IB complex. It binds specifically to the upstream control element. In Mus musculus (Mouse), this protein is Nucleolar transcription factor 1 (Ubtf).